A 257-amino-acid polypeptide reads, in one-letter code: Imidazole glycerol phosphate synthase subunit HisF (257 aa).

Catalysis depends on residues Asp-11 and Asp-130.

This sequence belongs to the HisA/HisF family. Heterodimer of HisH and HisF.

Its subcellular location is the cytoplasm. It carries out the reaction 5-[(5-phospho-1-deoxy-D-ribulos-1-ylimino)methylamino]-1-(5-phospho-beta-D-ribosyl)imidazole-4-carboxamide + L-glutamine = D-erythro-1-(imidazol-4-yl)glycerol 3-phosphate + 5-amino-1-(5-phospho-beta-D-ribosyl)imidazole-4-carboxamide + L-glutamate + H(+). Its pathway is amino-acid biosynthesis; L-histidine biosynthesis; L-histidine from 5-phospho-alpha-D-ribose 1-diphosphate: step 5/9. Functionally, IGPS catalyzes the conversion of PRFAR and glutamine to IGP, AICAR and glutamate. The HisF subunit catalyzes the cyclization activity that produces IGP and AICAR from PRFAR using the ammonia provided by the HisH subunit. The polypeptide is Imidazole glycerol phosphate synthase subunit HisF (Vibrio parahaemolyticus serotype O3:K6 (strain RIMD 2210633)).